A 387-amino-acid chain; its full sequence is Succinate--CoA ligase [ADP-forming] subunit beta (387 aa).

The ATP-grasp domain occupies 9 to 244; sequence KQLFAEYGIP…KTQEDETEVL (236 aa). Residues lysine 46, 53-55, glycine 102, and glutamate 107 contribute to the ATP site; that span reads GRG. The Mg(2+) site is built by asparagine 199 and aspartate 213. Residues asparagine 264 and 321–323 each bind substrate; that span reads GIV.

This sequence belongs to the succinate/malate CoA ligase beta subunit family. As to quaternary structure, heterotetramer of two alpha and two beta subunits. Mg(2+) is required as a cofactor.

It carries out the reaction succinate + ATP + CoA = succinyl-CoA + ADP + phosphate. It catalyses the reaction GTP + succinate + CoA = succinyl-CoA + GDP + phosphate. It functions in the pathway carbohydrate metabolism; tricarboxylic acid cycle; succinate from succinyl-CoA (ligase route): step 1/1. Succinyl-CoA synthetase functions in the citric acid cycle (TCA), coupling the hydrolysis of succinyl-CoA to the synthesis of either ATP or GTP and thus represents the only step of substrate-level phosphorylation in the TCA. The beta subunit provides nucleotide specificity of the enzyme and binds the substrate succinate, while the binding sites for coenzyme A and phosphate are found in the alpha subunit. The polypeptide is Succinate--CoA ligase [ADP-forming] subunit beta (Xylella fastidiosa (strain 9a5c)).